A 365-amino-acid chain; its full sequence is Phospho-N-acetylmuramoyl-pentapeptide-transferase (365 aa).

The next 11 membrane-spanning stretches (helical) occupy residues 15-35 (WPAA…DRLI), 39-59 (LLSL…WWGV), 84-104 (GTPT…GGLV), 114-134 (LLAI…DDWS), 156-176 (AAVL…TVSL), 178-198 (FNLD…VFLA), 209-229 (LDGL…LQLM), 235-255 (GDPA…GFLI), 263-283 (VFMG…VALL), 291-311 (LLMG…VWVF), and 343-363 (VVVP…LGLH).

It belongs to the glycosyltransferase 4 family. MraY subfamily. The cofactor is Mg(2+).

The protein localises to the cell inner membrane. The catalysed reaction is UDP-N-acetyl-alpha-D-muramoyl-L-alanyl-gamma-D-glutamyl-meso-2,6-diaminopimeloyl-D-alanyl-D-alanine + di-trans,octa-cis-undecaprenyl phosphate = di-trans,octa-cis-undecaprenyl diphospho-N-acetyl-alpha-D-muramoyl-L-alanyl-D-glutamyl-meso-2,6-diaminopimeloyl-D-alanyl-D-alanine + UMP. It participates in cell wall biogenesis; peptidoglycan biosynthesis. Its function is as follows. Catalyzes the initial step of the lipid cycle reactions in the biosynthesis of the cell wall peptidoglycan: transfers peptidoglycan precursor phospho-MurNAc-pentapeptide from UDP-MurNAc-pentapeptide onto the lipid carrier undecaprenyl phosphate, yielding undecaprenyl-pyrophosphoryl-MurNAc-pentapeptide, known as lipid I. This Synechococcus sp. (strain WH7803) protein is Phospho-N-acetylmuramoyl-pentapeptide-transferase.